The primary structure comprises 778 residues: Probable glutamine--tRNA ligase (778 aa).

Positions 188–205 are enriched in basic and acidic residues; sequence LKPQTKANDKPKAAKPKA. Residues 188 to 219 form a disordered region; it reads LKPQTKANDKPKAAKPKAEVTPAAQTAEAASD. Residues 273–283 carry the 'HIGH' region motif; that stretch reads PEPNGILHIGH. Residues 274–276 and 280–286 contribute to the ATP site; these read EPN and HIGHAKA. The L-glutamine site is built by Asp306 and Tyr441. Residues Thr460, 489–490, and 497–499 contribute to the ATP site; these read RL and VSK. Residues 496–500 carry the 'KMSKS' region motif; sequence LVSKR.

This sequence belongs to the class-I aminoacyl-tRNA synthetase family.

The enzyme catalyses tRNA(Gln) + L-glutamine + ATP = L-glutaminyl-tRNA(Gln) + AMP + diphosphate. In Drosophila melanogaster (Fruit fly), this protein is Probable glutamine--tRNA ligase.